The chain runs to 915 residues: Metabotropic glutamate receptor 7 (915 aa).

Positions 1-34 (MVQLGKLLRVLTLMKFPCCVLEVLLCVLAAAARG) are cleaved as a signal peptide. Residues 35-590 (QEMYAPHSIR…IIKLEWHSPW (556 aa)) are Extracellular-facing. An intrachain disulfide couples C67 to C109. Residue N98 is glycosylated (N-linked (GlcNAc...) asparagine). Residues S159, 180–182 (AST), Y230, and D314 contribute to the L-glutamate site. 7 disulfides stabilise this stretch: C249–C541, C374–C390, C430–C437, C523–C542, C527–C545, C548–C560, and C563–C576. Residue K407 participates in L-glutamate binding. N458 and N486 each carry an N-linked (GlcNAc...) asparagine glycan. N-linked (GlcNAc...) asparagine glycosylation occurs at N572. Residues 591 to 615 (AVIPVFLAMLGIIATIFVMATFIRY) traverse the membrane as a helical segment. The Cytoplasmic portion of the chain corresponds to 616–627 (NDTPIVRASGRE). The helical transmembrane segment at 628 to 648 (LSYVLLTGIFLCYIITFLMIA) threads the bilayer. At 649 to 654 (KPDVAV) the chain is on the extracellular side. Residues 655–675 (CSFRRVFLGLGMCISYAALLT) form a helical membrane-spanning segment. Residues 676 to 702 (KTNRIYRIFEQGKKSVTAPRLISPTSQ) are Cytoplasmic-facing. The helical transmembrane segment at 703–723 (LAITSSLISVQLLGVFIWFGV) threads the bilayer. The Extracellular portion of the chain corresponds to 724–753 (DPPNIIIDYDEHKTMNPEQARGVLKCDITD). A helical membrane pass occupies residues 754–775 (LQIICSLGYSILLMVTCTVYAI). Residues 776-788 (KTRGVPENFNEAK) lie on the Cytoplasmic side of the membrane. Residues 789 to 810 (PIGFTMYTTCIVWLAFIPIFFG) form a helical membrane-spanning segment. At 811 to 825 (TAQSAEKLYIQTTTL) the chain is on the extracellular side. Residues 826–850 (TISMNLSASVALGMLYMPKVYIIIF) form a helical membrane-spanning segment. At 851 to 915 (HPELNVQKRK…KYVSYNNLVI (65 aa)) the chain is on the cytoplasmic side. The disordered stretch occupies residues 874–895 (SRLSHKPSDRPNGEAKTELCEN). Over residues 879–892 (KPSDRPNGEAKTEL) the composition is skewed to basic and acidic residues. S900 bears the Phosphoserine mark.

This sequence belongs to the G-protein coupled receptor 3 family. Homodimer. Interacts with PICK1.

Its subcellular location is the cell membrane. G-protein coupled receptor activated by glutamate that regulates axon outgrowth through the MAPK-cAMP-PKA signaling pathway during neuronal development. Ligand binding causes a conformation change that triggers signaling via guanine nucleotide-binding proteins (G proteins) and modulates the activity of downstream effectors, such as adenylate cyclase that it inhibits. This chain is Metabotropic glutamate receptor 7 (Grm7), found in Mus musculus (Mouse).